Here is a 494-residue protein sequence, read N- to C-terminus: Zinc metalloproteinase/disintegrin (494 aa).

The N-terminal stretch at methionine 1–serine 20 is a signal peptide. The propeptide occupies lysine 21–serine 193. The 196-residue stretch at arginine 201–alanine 396 folds into the Peptidase M12B domain. Cystine bridges form between cysteine 311-cysteine 391, cysteine 351-cysteine 375, and cysteine 353-cysteine 358. Residue histidine 336 coordinates Zn(2+). Residue glutamate 337 is part of the active site. Residues histidine 340 and histidine 346 each contribute to the Zn(2+) site. Positions glutamate 410–glutamate 431 are excised as a propeptide. The Disintegrin domain maps to asparagine 417–glutamate 478. Disulfide bonds link cysteine 433–cysteine 442, cysteine 438–cysteine 463, cysteine 439–cysteine 468, and cysteine 451–cysteine 470. Positions arginine 455 to aspartate 457 match the Cell attachment site motif. Residues methionine 482 to methionine 494 constitute a propeptide that is removed on maturation.

The protein belongs to the venom metalloproteinase (M12B) family. P-II subfamily. P-IIa sub-subfamily. Monomer (disintegrin). As to expression, expressed by the venom gland.

Its subcellular location is the secreted. Impairs hemostasis in the envenomed animal. Its function is as follows. Inhibits ADP-induced platelet aggregation (IC(50)=168 nM). Inhibits alpha-5/beta-1 (ITGA5/ITGB1) integrin and induces the expression of a ligand-induced binding site epitope on beta-1 integrin subunit. Has a direct chemotactic stimulus on human neutrophils in vitro. The chain is Zinc metalloproteinase/disintegrin from Echis ocellatus (Ocellated saw-scaled viper).